We begin with the raw amino-acid sequence, 222 residues long: L-serine dehydratase, beta chain (222 aa).

An ACT domain is found at 150-222 (TILLEYPEQR…RFTTAKYVEV (73 aa)).

This sequence belongs to the iron-sulfur dependent L-serine dehydratase family. Heterooctamer of four alpha chains and four beta chains. [4Fe-4S] cluster serves as cofactor.

It catalyses the reaction L-serine = pyruvate + NH4(+). It functions in the pathway carbohydrate biosynthesis; gluconeogenesis. The chain is L-serine dehydratase, beta chain (sdhB) from Peptoniphilus asaccharolyticus (Peptostreptococcus asaccharolyticus).